Reading from the N-terminus, the 372-residue chain is Lysophosphatidic acid receptor 5 (372 aa).

Topologically, residues Met1–Met30 are extracellular. N-linked (GlcNAc...) asparagine glycosylation is found at Asn4, Asn8, and Asn13. The helical transmembrane segment at Val31–Phe51 threads the bilayer. The Cytoplasmic portion of the chain corresponds to Leu52–Ser59. The helical transmembrane segment at Val60–Pro80 threads the bilayer. Topologically, residues Leu81–Thr100 are extracellular. Cys98 and Cys179 are oxidised to a cystine. A helical membrane pass occupies residues Ser101–Val121. Residues Asp122–Arg140 are Cytoplasmic-facing. A helical membrane pass occupies residues Val141–Ala161. Topologically, residues Arg162–Arg191 are extracellular. Asn173 is a glycosylation site (N-linked (GlcNAc...) asparagine). Residues Leu192 to Val212 form a helical membrane-spanning segment. Residues Tyr213–Asn243 lie on the Cytoplasmic side of the membrane. Residues Leu244–Leu264 form a helical membrane-spanning segment. At Arg265–Arg280 the chain is on the extracellular side. Residues Gly281–Tyr301 traverse the membrane as a helical segment. The Cytoplasmic portion of the chain corresponds to Tyr302–Leu372.

This sequence belongs to the G-protein coupled receptor 1 family.

It localises to the cell membrane. In terms of biological role, receptor for lysophosphatidic acid (LPA), a mediator of diverse cellular activities. The sequence is that of Lysophosphatidic acid receptor 5 (Lpar5) from Mus musculus (Mouse).